Here is a 132-residue protein sequence, read N- to C-terminus: Inclusion membrane protein E (132 aa).

2 helical membrane-spanning segments follow: residues leucine 41 to valine 61 and phenylalanine 66 to alanine 86.

It localises to the secreted. It is found in the host vacuole. The protein localises to the host pathogen-containing vacuole. Its subcellular location is the host pathogen-containing vacuole membrane. Inclusion membrane protein probably involved in early modification events of the chlamydial inclusion. This Chlamydia trachomatis serovar L2 (strain ATCC VR-902B / DSM 19102 / 434/Bu) protein is Inclusion membrane protein E.